Here is a 214-residue protein sequence, read N- to C-terminus: Ribosomal RNA small subunit methyltransferase G (214 aa).

S-adenosyl-L-methionine contacts are provided by residues G77, L82, 128-129 (VE), and R143.

Belongs to the methyltransferase superfamily. RNA methyltransferase RsmG family.

The protein resides in the cytoplasm. The enzyme catalyses guanosine(527) in 16S rRNA + S-adenosyl-L-methionine = N(7)-methylguanosine(527) in 16S rRNA + S-adenosyl-L-homocysteine. Specifically methylates the N7 position of guanine in position 527 of 16S rRNA. In Nitrosomonas eutropha (strain DSM 101675 / C91 / Nm57), this protein is Ribosomal RNA small subunit methyltransferase G.